Reading from the N-terminus, the 324-residue chain is Olfactory receptor 51D1 (324 aa).

The Extracellular segment spans residues 1-38 (MQKPQLLVPIIATSNGNLVHAAYFLLVGIPGLGPTIHF). The helical transmembrane segment at 39–59 (WLAFPLCFMYALATLGNLTIV) threads the bilayer. Over 60–67 (LIIRVERR) the chain is Cytoplasmic. Residues 68 to 88 (LHEPMYLFLAMLSTIDLVLSS) form a helical membrane-spanning segment. The Extracellular segment spans residues 89–112 (ITMPKMASLFLMGIQEIEFNICLA). Cysteine 110 and cysteine 202 are oxidised to a cystine. The helical transmembrane segment at 113-133 (QMFLIHALSAVESAVLLAMAF) threads the bilayer. Over 134-152 (DRFVAICHPLRHASVLTGC) the chain is Cytoplasmic. Residues 153–173 (TVAKIGLSALTRGFVFFFPLP) traverse the membrane as a helical segment. Over 174–209 (FILKWLSYCQTHTVTHSFCLHQDIMKLSCTDTRVNV) the chain is Extracellular. A helical membrane pass occupies residues 210-230 (VYGLFIILSVMGVDSLFIGFS). The Cytoplasmic portion of the chain corresponds to 231–250 (YILILWAVLELSSRRAALKA). Residues 251–271 (FNTCISHLCAVLVFYVPLIGL) form a helical membrane-spanning segment. Topologically, residues 272 to 285 (SVVHRLGGPTSLLH) are extracellular. Residues 286-306 (VVMANTYLLLPPVVNPLVYGA) form a helical membrane-spanning segment. The Cytoplasmic segment spans residues 307–324 (KTKEICSRVLCMFSQGGK).

It belongs to the G-protein coupled receptor 1 family.

Its subcellular location is the cell membrane. Its function is as follows. Odorant receptor. This chain is Olfactory receptor 51D1 (OR51D1), found in Homo sapiens (Human).